A 226-amino-acid chain; its full sequence is MEAVTKLDVEGTAFDSVIIPPGSSKTHFLGGAGVRGLEIGGKFIAFTAIGIYLETDSIPFLADKWKGKTGEELAGSLDFFRDICTGPFEKFTNVTMILPLTGEQYSEKVTENCVAYWKAIGIYTDAEASAVDKFKQAFKPESFPPGSSILFTHTPSGTLKIAFSKDGSVSKDEGVLIENKALTQAVLESIIGEHGVSPAAKLSIASRLSEIMNKVGNVEEKLPVLS.

Substrate contacts are provided by threonine 47, asparagine 112, and serine 189.

This sequence belongs to the chalcone isomerase family.

It catalyses the reaction a chalcone = a flavanone.. It participates in secondary metabolite biosynthesis; flavonoid biosynthesis. Functionally, catalyzes the intramolecular cyclization of bicyclic chalcones into tricyclic (S)-flavanones. Responsible for the isomerization of 4,2',4',6'-tetrahydroxychalcone (also termed chalcone) into naringenin. The polypeptide is Chalcone--flavanone isomerase (CHI) (Allium cepa (Onion)).